A 114-amino-acid polypeptide reads, in one-letter code: UPF0145 protein PF1756 (114 aa).

It belongs to the UPF0145 family.

The sequence is that of UPF0145 protein PF1756 from Pyrococcus furiosus (strain ATCC 43587 / DSM 3638 / JCM 8422 / Vc1).